The primary structure comprises 398 residues: Phospholipase C (398 aa).

A signal peptide spans 1–28 (MKRKICKALICAALATSLWAGASTKVYA). The Zn(2+) site is built by Trp29, His39, Asp84, His96, His154, Asp158, His164, His176, and Glu180. A Zn-dependent PLC domain is found at 29–278 (WDGKIDGTGT…HDVSEGNDPS (250 aa)). A linker region spans residues 275–283 (NDPSVGKNV). A PLAT domain is found at 284-398 (KELVAYISTS…ISGNSTYNIK (115 aa)). The Ca(2+) site is built by Asp297, Gly299, Thr300, Asp301, Asp321, Asn322, Gly324, Asn325, Asp326, Asp364, and Ala365.

The protein belongs to the bacterial zinc-metallophospholipase C family. Ca(2+) is required as a cofactor. Requires Zn(2+) as cofactor.

Its subcellular location is the secreted. The enzyme catalyses a 1,2-diacyl-sn-glycero-3-phosphocholine + H2O = phosphocholine + a 1,2-diacyl-sn-glycerol + H(+). Functionally, bacterial hemolysins are exotoxins that attack blood cell membranes and cause cell rupture. Constitutes an essential virulence factor in gas gangrene. Binds to eukaryotic membranes where it hydrolyzes both phosphatidylcholine and sphingomyelin. The diacylglycerol produced can activate both the arachidonic acid pathway, leading to modulation of the inflammatory response cascade and thrombosis, and protein kinase C, leading to activation of eukaryotic phospholipases and further membrane damage. Acts on human and mouse erythrocytes, but not on rabbit or horse erythrocytes. This chain is Phospholipase C (plc), found in Clostridium perfringens (strain ATCC 13124 / DSM 756 / JCM 1290 / NCIMB 6125 / NCTC 8237 / Type A).